Here is a 1042-residue protein sequence, read N- to C-terminus: Disintegrin and metalloproteinase domain-containing protein unc-71 (1042 aa).

Positions 1-23 (MICASKITMLGLLVMCTLGGVLG) are cleaved as a signal peptide. Residues 24–746 (KVDIRQTTAN…NIGTTLETAT (723 aa)) lie on the Extracellular side of the membrane. N-linked (GlcNAc...) asparagine glycans are attached at residues N103 and N155. Residues 227 to 431 (KYVEVALIAD…GNIQCLLNKP (205 aa)) enclose the Peptidase M12B domain. 4 disulfide bridges follow: C338–C426, C378–C410, C380–C386, and C496–C516. The 88-residue stretch at 437-524 (LRECGNGVVD…DCPPDGHLID (88 aa)) folds into the Disintegrin domain. The N-linked (GlcNAc...) asparagine glycan is linked to N538. One can recognise an EGF-like domain in the interval 662–699 (SATACPTNNLALLCSGHGHCTTTARCVCFNGWSGVACD). 3 disulfides stabilise this stretch: C666/C681, C675/C687, and C689/C698. A glycan (N-linked (GlcNAc...) asparagine) is linked at N703. Residues 747 to 767 (LFAILLGFGVFLLLCLVCLML) form a helical membrane-spanning segment. The Cytoplasmic segment spans residues 768–1042 (CYRRRSVVEI…KLEMTNSMHN (275 aa)). Disordered stretches follow at residues 779–809 (KPSD…RKRK), 825–850 (DERD…RRNG), and 980–1028 (HDVG…PSLF). The segment covering 825–836 (DERDSTSLRSRD) has biased composition (basic and acidic residues). The segment covering 1002-1027 (DSPTLVNGASSSSTSNNYNFRQSPSL) has biased composition (polar residues).

The protein localises to the cell membrane. In terms of biological role, involved in the migration of sex myoblasts (progenitors of egg-laying muscles), Q neuroblasts and BDU interneurons during development. Involved in axon branching and guidance of neurons including GABAergic type D motor neurons. Promotes sex myoblast migration and positioning independently of gonad attraction cues. May act downstream of mig-13 in order to promote the guidance, migration and positioning of Q neuroblasts and their descendants along the anteroposterior body axis. Required for coordinated movements. This Caenorhabditis elegans protein is Disintegrin and metalloproteinase domain-containing protein unc-71.